A 96-amino-acid polypeptide reads, in one-letter code: Large ribosomal subunit protein eL14 (96 aa).

It belongs to the eukaryotic ribosomal protein eL14 family.

In Saccharolobus solfataricus (strain ATCC 35092 / DSM 1617 / JCM 11322 / P2) (Sulfolobus solfataricus), this protein is Large ribosomal subunit protein eL14.